Consider the following 239-residue polypeptide: 1-(5-phosphoribosyl)-5-[(5-phosphoribosylamino)methylideneamino] imidazole-4-carboxamide isomerase (239 aa).

The active-site Proton acceptor is D8. Catalysis depends on D129, which acts as the Proton donor.

It belongs to the HisA/HisF family.

It is found in the cytoplasm. The enzyme catalyses 1-(5-phospho-beta-D-ribosyl)-5-[(5-phospho-beta-D-ribosylamino)methylideneamino]imidazole-4-carboxamide = 5-[(5-phospho-1-deoxy-D-ribulos-1-ylimino)methylamino]-1-(5-phospho-beta-D-ribosyl)imidazole-4-carboxamide. The protein operates within amino-acid biosynthesis; L-histidine biosynthesis; L-histidine from 5-phospho-alpha-D-ribose 1-diphosphate: step 4/9. This is 1-(5-phosphoribosyl)-5-[(5-phosphoribosylamino)methylideneamino] imidazole-4-carboxamide isomerase from Bacillus cereus (strain B4264).